The following is a 108-amino-acid chain: Nucleoid-associated protein Bmul_1447/BMULJ_01796 (108 aa).

Positions 84–108 (EATSQEKMSGMTSGLPLPPGFKLPF) are disordered. The segment covering 85–95 (ATSQEKMSGMT) has biased composition (polar residues). Pro residues predominate over residues 99 to 108 (PLPPGFKLPF).

This sequence belongs to the YbaB/EbfC family. In terms of assembly, homodimer.

It is found in the cytoplasm. The protein resides in the nucleoid. In terms of biological role, binds to DNA and alters its conformation. May be involved in regulation of gene expression, nucleoid organization and DNA protection. This chain is Nucleoid-associated protein Bmul_1447/BMULJ_01796, found in Burkholderia multivorans (strain ATCC 17616 / 249).